The following is a 612-amino-acid chain: MFRTAVMMAASLALTGAVVAHAYYLKHQFYPTVVYLTKSSPSMAVLYIQAFVLVFLLGKVMGKVFFGQLRAAEMEHLLERSWYAVTETCLAFTVFRDDFSPRFVALFTLLLFLKCFHWLAEDRVDFMERSPNISWLFHCRIVSLMFLLGILDFLFVSHAYHSILTRGASVQLVFGFEYAILMTMVLTIFIKYVLHSVDLQSENPWDNKAVYMLYTELFTGFIKVLLYMAFMTIMIKVHTFPLFAIRPMYLAMRQFKKAVTDAIMSRRAIRNMNTLYPDATPEELQAVDNVCIICREEMVTGAKRLPCNHIFHTSCLRSWFQRQQTCPTCRMDVLRASLPAQSPPPPEPADQGPPPAPHPQPLLPQPPNFPQGLLPPFPPGMFPLWPPMGPFPPVPPPPSSGEAAAPPPTSTAVSRPSGAATTTAAGTSTSAPAPGSVPGPEAGPAPGFPFPPPWMGMPLPPPFAFPPMPVPPAGFAGLTPEELRALEGHERQHLEARLQSLRNIHTLLDAAMLQINQYLTVLASLGPPRPATSVNPTEETASTVVSAAPSTSAPSSEAPTPSPGASPPIPEAEKPPAPESVGIVEELPEDGEPDAAELRRRRLQKLESPVAH.

The Cytoplasmic portion of the chain corresponds to 1–4 (MFRT). Residues 1 to 251 (MFRTAVMMAA…LFAIRPMYLA (251 aa)) form an involved in FAM8A1 interaction region. The chain crosses the membrane as a helical span at residues 5-25 (AVMMAASLALTGAVVAHAYYL). The interval 21–42 (HAYYLKHQFYPTVVYLTKSSPS) is interaction with SEL1L. The Lumenal portion of the chain corresponds to 26–41 (KHQFYPTVVYLTKSSP). The helical transmembrane segment at 42 to 62 (SMAVLYIQAFVLVFLLGKVMG) threads the bilayer. At 63 to 98 (KVFFGQLRAAEMEHLLERSWYAVTETCLAFTVFRDD) the chain is on the cytoplasmic side. A helical membrane pass occupies residues 99–119 (FSPRFVALFTLLLFLKCFHWL). The Lumenal portion of the chain corresponds to 120–140 (AEDRVDFMERSPNISWLFHCR). Residues 141 to 161 (IVSLMFLLGILDFLFVSHAYH) traverse the membrane as a helical segment. Over 162–169 (SILTRGAS) the chain is Cytoplasmic. A helical transmembrane segment spans residues 170 to 190 (VQLVFGFEYAILMTMVLTIFI). At 191 to 224 (KYVLHSVDLQSENPWDNKAVYMLYTELFTGFIKV) the chain is on the lumenal side. A helical membrane pass occupies residues 225 to 245 (LLYMAFMTIMIKVHTFPLFAI). The interaction with p53/TP53 stretch occupies residues 236–270 (KVHTFPLFAIRPMYLAMRQFKKAVTDAIMSRRAIR). Over 246 to 612 (RPMYLAMRQF…LQKLESPVAH (367 aa)) the chain is Cytoplasmic. The Zn(2+) site is built by cysteine 291, cysteine 294, cysteine 307, histidine 309, histidine 312, cysteine 315, cysteine 326, and cysteine 329. The segment at 291 to 330 (CIICREEMVTGAKRLPCNHIFHTSCLRSWFQRQQTCPTCR) adopts an RING-type; atypical zinc-finger fold. 2 disordered regions span residues 337 to 375 (SLPA…GLLP) and 393 to 449 (PVPP…PGFP). Pro residues-rich tracts occupy residues 341–375 (QSPP…GLLP) and 393–409 (PVPP…PPPT). Residues 416-434 (PSGAATTTAAGTSTSAPAP) are compositionally biased toward low complexity. The segment covering 435-449 (GSVPGPEAGPAPGFP) has biased composition (pro residues). Residues 474 to 529 (GFAGLTPEELRALEGHERQHLEARLQSLRNIHTLLDAAMLQINQYLTVLASLGPPR) form an HAF-H domain; necessary to form higher-order Hrd1 complexes region. Positions 530-612 (PATSVNPTEE…LQKLESPVAH (83 aa)) are disordered. A compositionally biased stretch (low complexity) spans 539-559 (ETASTVVSAAPSTSAPSSEAP). The segment covering 560–570 (TPSPGASPPIP) has biased composition (pro residues). The span at 586 to 595 (ELPEDGEPDA) shows a compositional bias: acidic residues. Serine 608 carries the post-translational modification Phosphoserine.

It belongs to the HRD1 family. As to quaternary structure, homodimer. Interacts with p53/TP53. Interacts with HTT. Component of the HRD1 complex, which comprises at least SYNV1/HRD1, DERL1/2, FAM8A1, HERPUD1/HERP, OS9, SEL1L and UBE2J1. FAM8A1 is stabilized by interaction with SYNV1, which prevents its proteasomal degradation. OS9 and UBE2J1 recruitment to the complex may be mediated by SEL1L. SYNV1 assembles with SEL1L and FAM8A1 through its transmembrane domains, but interaction with its cytoplasmic domain is required to confer stability to FAM8A1 and enhance recruitment of HERPUD1. The HRD1 complex also associates with VIMP and may transfer misfolded proteins from the endoplasmic reticulum to VCP. May form a complex with ERLEC1; HSPA5; OS9 and SEL1L. Interacts with VCP. Interacts with UBXN6. Interacts with BAG6. Interacts with NFE2L1. Interacts (via N-terminus) with components of the pre-B cell receptor, including IGLL1 and VPREB1A. Interacts with CREB3L3; this interaction leads to CREB3L3 ubiquitination and proteasomal degradation. Auto-ubiquitinated. Deubiquitinated by USP19. In terms of tissue distribution, widely expressed, with highest levels in bone, spleen, lung and testis. In the brain, present in neurons but not in glial cells. Up-regulated in synovial tissues from mice with collagen-induced arthritis (at protein level). Expressed in the liver.

The protein resides in the endoplasmic reticulum membrane. The catalysed reaction is S-ubiquitinyl-[E2 ubiquitin-conjugating enzyme]-L-cysteine + [acceptor protein]-L-lysine = [E2 ubiquitin-conjugating enzyme]-L-cysteine + N(6)-ubiquitinyl-[acceptor protein]-L-lysine.. The protein operates within protein modification; protein ubiquitination. Its function is as follows. E3 ubiquitin-protein ligase which accepts ubiquitin specifically from endoplasmic reticulum-associated UBC7 E2 ligase and transfers it to substrates, promoting their degradation. Component of the endoplasmic reticulum quality control (ERQC) system also called ER-associated degradation (ERAD) involved in ubiquitin-dependent degradation of misfolded endoplasmic reticulum proteins. Also promotes the degradation of normal but naturally short-lived proteins such as SGK. Protects cells from ER stress-induced apoptosis. Sequesters p53/TP53 in the cytoplasm and promotes its degradation, thereby negatively regulating its biological function in transcription, cell cycle regulation and apoptosis. Required for embryogenesis. Mediates the ubiquitination and subsequent degradation of cytoplasmic NFE2L1. During the early stage of B cell development, required for degradation of the pre-B cell receptor (pre-BCR) complex, hence supporting further differentiation into mature B cells. This chain is E3 ubiquitin-protein ligase synoviolin (Syvn1), found in Mus musculus (Mouse).